Reading from the N-terminus, the 3471-residue chain is Genome polyprotein (3471 aa).

The stretch at 513-603 (EVQDALEKSM…RADIDALKKK (91 aa)) forms a coiled coil. 2 disordered regions span residues 603–639 (KPAQ…EMSE) and 1271–1307 (NKTT…ARTS). Polar residues-rich tracts occupy residues 606–621 (QSVT…SGTA) and 1271–1291 (NKTT…TSTV). Transmembrane regions (helical) follow at residues 1493-1513 (DKWI…LHYY) and 1592-1612 (MSSL…GKIP). An SF3 helicase domain is found at 1748–1914 (LELMNESYTY…PDVPKNEANP (167 aa)). Position 1774 to 1781 (1774 to 1781 (GAPGVGKS)) interacts with ATP. Residues 2360–2380 (ILLAIGASVAVAGVAVGAVIL) form a helical membrane-spanning segment. The span at 2391–2401 (EDEEIEGEEGE) shows a compositional bias: acidic residues. Disordered regions lie at residues 2391 to 2411 (EDEE…HESD) and 2435 to 2460 (VAEA…NFLG). Basic and acidic residues predominate over residues 2435 to 2448 (VAEAHEEKSTEKPR). Residues 2629–2847 (GVDRDLSMTN…YAETLTQEHL (219 aa)) form the Peptidase C3 domain. Residues His-2677, Glu-2714, and Cys-2808 each act as for picornain 3C-like protease activity in the active site. The 132-residue stretch at 3152–3283 (TKGFAGDYSK…SVHEEFLDVY (132 aa)) folds into the RdRp catalytic domain.

In terms of processing, specific enzymatic cleavages by picornain 3C-like protease in vivo yield mature proteins. Picornain 3C-like protease is autocatalytically processed.

The protein localises to the virion. Its subcellular location is the host membrane. It carries out the reaction RNA(n) + a ribonucleoside 5'-triphosphate = RNA(n+1) + diphosphate. In terms of biological role, picornain 3C-like protease is a thiol protease that probably cleaves the polyprotein. In Oryza sativa (Rice), this protein is Genome polyprotein.